Consider the following 284-residue polypeptide: Proline-rich protein 32 (284 aa).

Disordered regions lie at residues 59-80 (RPPF…APRH), 97-119 (EINS…NMSQ), and 143-171 (SGNN…RGPP).

This chain is Proline-rich protein 32 (Prr32), found in Mus musculus (Mouse).